A 148-amino-acid chain; its full sequence is Putative antiporter subunit mnhG2 (148 aa).

A run of 3 helical transmembrane segments spans residues 11–31, 51–71, and 72–92; these read IAAIMIFLGSIIALISSIGLI, VLLTLVGVIIFFISSQGYLSV, and RLILALVFINLTSPVGGHLIS. The interval 125-148 is disordered; the sequence is EQLKQRAHEREERRRKTYEKEHDY. Basic and acidic residues predominate over residues 127-148; sequence LKQRAHEREERRRKTYEKEHDY.

The protein belongs to the CPA3 antiporters (TC 2.A.63) subunit G family. As to quaternary structure, may form a heterooligomeric complex that consists of seven subunits: mnhA2, mnhB2, mnhC2, mnhD2, mnhE2, mnhF2 and mnhG2.

It is found in the cell membrane. This is Putative antiporter subunit mnhG2 (mnhG2) from Staphylococcus saprophyticus subsp. saprophyticus (strain ATCC 15305 / DSM 20229 / NCIMB 8711 / NCTC 7292 / S-41).